A 577-amino-acid chain; its full sequence is Probable HECT-type ubiquitin ligase-interacting protein creD (577 aa).

Disordered regions lie at residues 376–398 (LDPAGYRTPGPGSGPGTPFGTLS) and 428–566 (NLHA…EEER). Polar residues-rich tracts occupy residues 428–447 (NLHASRHSNPSPSESENQLE) and 460–472 (SSGSNTHSLTSPE). Basic and acidic residues predominate over residues 473–486 (LSRRPSDEVDHDHV). The segment covering 528 to 544 (SPQQAHVRSANRSSSYF) has biased composition (polar residues).

This sequence belongs to the arrestin family. As to quaternary structure, interacts with hulA.

Functionally, component of the regulatory network controlling carbon source utilization through ubiquitination and deubiquitination involving creA, creB, creC, creD and acrB. May be involved in signaling by recognizing appropriately phosphorylated substrates via its arrestin domains and then recruit a HECT-type ubiquitin ligase such as hulA, leading to ubiquitination of the substrate, providing a link between ubiquitination and phosphorylation in protein regulation and stability. The protein is Probable HECT-type ubiquitin ligase-interacting protein creD (creD) of Aspergillus terreus (strain NIH 2624 / FGSC A1156).